We begin with the raw amino-acid sequence, 365 residues long: UDP-N-acetylglucosamine--N-acetylmuramyl-(pentapeptide) pyrophosphoryl-undecaprenol N-acetylglucosamine transferase (365 aa).

Residues 10 to 12 (TAG), Asn124, Arg161, Ser195, Ile248, and Gln292 each bind UDP-N-acetyl-alpha-D-glucosamine.

This sequence belongs to the glycosyltransferase 28 family. MurG subfamily.

The protein resides in the cell membrane. The enzyme catalyses di-trans,octa-cis-undecaprenyl diphospho-N-acetyl-alpha-D-muramoyl-L-alanyl-D-glutamyl-meso-2,6-diaminopimeloyl-D-alanyl-D-alanine + UDP-N-acetyl-alpha-D-glucosamine = di-trans,octa-cis-undecaprenyl diphospho-[N-acetyl-alpha-D-glucosaminyl-(1-&gt;4)]-N-acetyl-alpha-D-muramoyl-L-alanyl-D-glutamyl-meso-2,6-diaminopimeloyl-D-alanyl-D-alanine + UDP + H(+). It participates in cell wall biogenesis; peptidoglycan biosynthesis. Cell wall formation. Catalyzes the transfer of a GlcNAc subunit on undecaprenyl-pyrophosphoryl-MurNAc-pentapeptide (lipid intermediate I) to form undecaprenyl-pyrophosphoryl-MurNAc-(pentapeptide)GlcNAc (lipid intermediate II). This Nocardioides sp. (strain ATCC BAA-499 / JS614) protein is UDP-N-acetylglucosamine--N-acetylmuramyl-(pentapeptide) pyrophosphoryl-undecaprenol N-acetylglucosamine transferase.